Consider the following 503-residue polypeptide: Probable cytosol aminopeptidase (503 aa).

Residues Lys-270 and Asp-275 each coordinate Mn(2+). Lys-282 is a catalytic residue. Positions 293, 352, and 354 each coordinate Mn(2+). Arg-356 is a catalytic residue.

This sequence belongs to the peptidase M17 family. Mn(2+) serves as cofactor.

It is found in the cytoplasm. The enzyme catalyses Release of an N-terminal amino acid, Xaa-|-Yaa-, in which Xaa is preferably Leu, but may be other amino acids including Pro although not Arg or Lys, and Yaa may be Pro. Amino acid amides and methyl esters are also readily hydrolyzed, but rates on arylamides are exceedingly low.. It catalyses the reaction Release of an N-terminal amino acid, preferentially leucine, but not glutamic or aspartic acids.. Its function is as follows. Presumably involved in the processing and regular turnover of intracellular proteins. Catalyzes the removal of unsubstituted N-terminal amino acids from various peptides. This Klebsiella pneumoniae (strain 342) protein is Probable cytosol aminopeptidase.